Here is a 131-residue protein sequence, read N- to C-terminus: Small ribosomal subunit protein bS6 (131 aa).

A disordered region spans residues E98–E131. Over residues K104–F116 the composition is skewed to basic and acidic residues. Over residues T120–E131 the composition is skewed to acidic residues.

It belongs to the bacterial ribosomal protein bS6 family.

Binds together with bS18 to 16S ribosomal RNA. This chain is Small ribosomal subunit protein bS6, found in Salmonella dublin (strain CT_02021853).